Reading from the N-terminus, the 288-residue chain is uncharacterized protein (288 aa).

Residues 1-27 (MKFEFRTLVLISLAVVVVLSGCSQSPS) form the signal peptide. The segment at 144-167 (GESGEAGGAGEQLPASDQASGEEP) is disordered.

This is an uncharacterized protein from Archaeoglobus fulgidus (strain ATCC 49558 / DSM 4304 / JCM 9628 / NBRC 100126 / VC-16).